The chain runs to 98 residues: ORF9b protein (98 aa).

The region spanning 9 to 98 is the 9b domain; that stretch reads VPPALHLVDP…PDEFVVVTAK (90 aa). Positions 46–54 match the Nuclear export signal motif; sequence ILRLGSQLS.

This sequence belongs to the coronavirus group 2 protein 9b family. As to quaternary structure, homodimer. Interacts with host XPO1; this interaction mediates protein ORF9b export out of the nucleus. Interacts with host MAVS. Interacts with protein ORF6.

The protein localises to the virion. The protein resides in the host cytoplasmic vesicle membrane. It is found in the host cytoplasm. It localises to the host endoplasmic reticulum. Its subcellular location is the host nucleus. The protein localises to the host mitochondrion. Functionally, plays a role in the inhibition of host innate immune response by targeting the mitochondrial-associated adapter MAVS. Mechanistically, usurps the E3 ligase ITCH to trigger the degradation of MAVS, TRAF3, and TRAF6. In addition, causes mitochondrial elongation by triggering ubiquitination and proteasomal degradation of dynamin-like protein 1/DNM1L. This Homo sapiens (Human) protein is ORF9b protein.